The chain runs to 662 residues: Fructose-1,6-bisphosphatase class 3 (662 aa).

The protein belongs to the FBPase class 3 family. Requires Mn(2+) as cofactor.

It catalyses the reaction beta-D-fructose 1,6-bisphosphate + H2O = beta-D-fructose 6-phosphate + phosphate. Its pathway is carbohydrate biosynthesis; gluconeogenesis. The polypeptide is Fructose-1,6-bisphosphatase class 3 (Clostridium tetani (strain Massachusetts / E88)).